We begin with the raw amino-acid sequence, 351 residues long: Transcriptional activator POG1 (351 aa).

The segment covering Met-1–Thr-27 has biased composition (basic and acidic residues). The interval Met-1 to Lys-56 is disordered. Polar residues predominate over residues Ser-28–Lys-56. A phosphoserine mark is found at Ser-152 and Ser-168. 2 disordered regions span residues Gly-237–Met-256 and Ser-280–Thr-351. Composition is skewed to polar residues over residues Gln-241–Met-256 and Ile-287–Pro-296. Ser-314 is modified (phosphoserine).

This sequence belongs to the POG1 family. Post-translationally, phosphorylated by CDC28.

It localises to the nucleus. Functionally, transcriptional activator which promotes cell cycle recovery with CLN2, after pheromone induced G1 arrest, probably inhibiting the ability of STE20 to activate the pheromone response pathway. Binds the promoters of genes that function in cell cycle regulation, cytoskeletal organization, and spindle assembly. May also be involved in stress-resistance. The sequence is that of Transcriptional activator POG1 (POG1) from Saccharomyces cerevisiae (strain YJM789) (Baker's yeast).